The following is a 434-amino-acid chain: Glutamyl-tRNA reductase (434 aa).

Substrate-binding positions include 49–52 (TCNR), Ser-109, 114–116 (EPQ), and Gln-120. Catalysis depends on Cys-50, which acts as the Nucleophile. NADP(+) is bound at residue 189-194 (GAGEMC).

This sequence belongs to the glutamyl-tRNA reductase family. As to quaternary structure, homodimer.

The catalysed reaction is (S)-4-amino-5-oxopentanoate + tRNA(Glu) + NADP(+) = L-glutamyl-tRNA(Glu) + NADPH + H(+). The protein operates within porphyrin-containing compound metabolism; protoporphyrin-IX biosynthesis; 5-aminolevulinate from L-glutamyl-tRNA(Glu): step 1/2. Functionally, catalyzes the NADPH-dependent reduction of glutamyl-tRNA(Glu) to glutamate 1-semialdehyde (GSA). This Geotalea uraniireducens (strain Rf4) (Geobacter uraniireducens) protein is Glutamyl-tRNA reductase.